The sequence spans 169 residues: Protein UL138 (169 aa).

The helical transmembrane segment at 8-28 (VGLPIIGVMLVLIVAILCYLA) threads the bilayer. The segment at 109-133 (DRRAGSSSSSSVHVANQRNSVPPPD) is disordered.

Interacts with host TNFR1. Interacts with host MRP1. Interacts with host UAF1/WDR48. Interacts with host STING1.

Its subcellular location is the host Golgi apparatus membrane. Functionally, plays an important role in the establishment of latent viral infection. Modulates the expression of several host cell surface receptors such as TNFR1, CD36 or the MRP1 transporter during productive infection. For instance, associates with host MRP1 and induces its lysosomal degradation. Plays an inhibitory role in the host cGAS/STING/TBK1 pathway and upstream of IRF3 phosphorylation and NF-kappa-B leading to inhibition of interferon beta production during both lytic and latent infections. Also participates in the establishment of latency by sustaining an innate immune response through phosphorylation and activation of host STAT1. This chain is Protein UL138 (UL138), found in Human cytomegalovirus (strain Merlin) (HHV-5).